The chain runs to 198 residues: Recombination protein RecR (198 aa).

The C4-type zinc finger occupies 57-72 (CSVCGHITEEDPCYIC). In terms of domain architecture, Toprim spans 80 to 175 (SVICVVEDDK…KVTRLAQGLS (96 aa)).

It belongs to the RecR family.

Its function is as follows. May play a role in DNA repair. It seems to be involved in an RecBC-independent recombinational process of DNA repair. It may act with RecF and RecO. The protein is Recombination protein RecR of Staphylococcus carnosus (strain TM300).